The chain runs to 117 residues: Large ribosomal subunit protein uL18 (117 aa).

It belongs to the universal ribosomal protein uL18 family. As to quaternary structure, part of the 50S ribosomal subunit; part of the 5S rRNA/L5/L18/L25 subcomplex. Contacts the 5S and 23S rRNAs.

Its function is as follows. This is one of the proteins that bind and probably mediate the attachment of the 5S RNA into the large ribosomal subunit, where it forms part of the central protuberance. The protein is Large ribosomal subunit protein uL18 of Edwardsiella ictaluri (strain 93-146).